The sequence spans 165 residues: Chorismate pyruvate-lyase (165 aa).

Substrate contacts are provided by Met35, Arg77, Leu115, and Glu156.

Belongs to the UbiC family. As to quaternary structure, monomer.

It localises to the cytoplasm. It carries out the reaction chorismate = 4-hydroxybenzoate + pyruvate. It functions in the pathway cofactor biosynthesis; ubiquinone biosynthesis. Its function is as follows. Removes the pyruvyl group from chorismate, with concomitant aromatization of the ring, to provide 4-hydroxybenzoate (4HB) for the ubiquinone pathway. The sequence is that of Chorismate pyruvate-lyase from Shigella sonnei (strain Ss046).